Here is a 262-residue protein sequence, read N- to C-terminus: Troponin T, slow skeletal muscle (262 aa).

Over residues 1–31 (MSDTEEQEYEEEQAEDEEAVEEEEAPEEPEP) the composition is skewed to acidic residues. 2 disordered regions span residues 1–62 (MSDT…ERVD) and 109–153 (ERAE…KKKV). The residue at position 2 (S2) is a Phosphoserine; by CK2. Basic and acidic residues predominate over residues 32 to 41 (VAEREEERPK). A compositionally biased stretch (pro residues) spans 43-55 (SRPVVPPLIPPKI). A compositionally biased stretch (basic and acidic residues) spans 109-149 (ERAEQQRFRTEKERERQAKLAEEKMRKEEEEAKKRAEDDAK).

Belongs to the troponin T family. Interacts with TPM3. As to expression, expressed in adult soleus muscle.

In terms of biological role, troponin T is the tropomyosin-binding subunit of troponin, the thin filament regulatory complex which confers calcium-sensitivity to striated muscle actomyosin ATPase activity. This Mus musculus (Mouse) protein is Troponin T, slow skeletal muscle (Tnnt1).